The primary structure comprises 477 residues: P3 protein (477 aa).

A disordered region spans residues 1 to 21 (MVFRSGEGHSLQWPGPEGGTG). A run of 8 helical transmembrane segments spans residues 225 to 245 (PMLLGLLGQFLVMPFYAFLMA), 253 to 273 (ALALGLIITCSSPGGGGSYLF), 281 to 301 (VTLAISMTFISTVAATGFLPL), 320 to 340 (VSKILGTLLFIAIPIAAGVVI), 361 to 381 (VLLLGGLFLAYRMGVFILAGV), 383 to 403 (LPIVLVGFTVPLVGLLVGYGL), 417 to 437 (VSIEVGVQNSLLALAMLQLSL), and 450 to 470 (FLVALSGTSEMLALVIGHFIY).

Belongs to the bile acid:sodium symporter (BASS) (TC 2.A.28) family.

Its subcellular location is the membrane. In terms of biological role, the ubiquitous expression and the conservation of the sequence in distant animal species suggest that the gene codes for a protein with housekeeping functions. This Bos taurus (Bovine) protein is P3 protein (SLC10A3).